A 435-amino-acid chain; its full sequence is Putative magnesium transporter MRS2-H (435 aa).

Positions 19–54 (FSSSPESRRCRSVHRVPSRPRPPLAPPARVMGKGNS) are disordered. Helical transmembrane passes span 369–389 (LTLIIASFGIAINTFIAAAFA) and 408–428 (FVGATSFLCMSIVILLFTYAW).

Belongs to the CorA metal ion transporter (MIT) (TC 1.A.35.5) family.

The protein localises to the membrane. Functionally, putative magnesium transporter. This chain is Putative magnesium transporter MRS2-H (MRS2-H), found in Oryza sativa subsp. indica (Rice).